The chain runs to 214 residues: uncharacterized protein (214 aa).

7 helical membrane passes run 4 to 23 (VSIV…FSSF), 35 to 57 (SFVH…LGYY), 67 to 89 (QWMR…FLFT), 96 to 118 (VSLV…VHVY), 128 to 150 (ARVM…VSFS), 155 to 177 (LPLL…SATV), and 187 to 209 (TVVY…FFAV).

Its subcellular location is the cell membrane. This is an uncharacterized protein from Treponema pallidum (strain Nichols).